Reading from the N-terminus, the 185-residue chain is Large ribosomal subunit protein uL5 (185 aa).

The protein belongs to the universal ribosomal protein uL5 family. In terms of assembly, part of the 50S ribosomal subunit; part of the 5S rRNA/L5/L18/L25 subcomplex. Contacts the 5S rRNA and the P site tRNA. Forms a bridge to the 30S subunit in the 70S ribosome.

In terms of biological role, this is one of the proteins that bind and probably mediate the attachment of the 5S RNA into the large ribosomal subunit, where it forms part of the central protuberance. In the 70S ribosome it contacts protein S13 of the 30S subunit (bridge B1b), connecting the 2 subunits; this bridge is implicated in subunit movement. Contacts the P site tRNA; the 5S rRNA and some of its associated proteins might help stabilize positioning of ribosome-bound tRNAs. In Streptomyces avermitilis (strain ATCC 31267 / DSM 46492 / JCM 5070 / NBRC 14893 / NCIMB 12804 / NRRL 8165 / MA-4680), this protein is Large ribosomal subunit protein uL5.